The sequence spans 226 residues: Protein GrpE (226 aa).

Disordered stretches follow at residues 1–31 (MTPN…PDTL) and 189–226 (VSKG…PAEA). A compositionally biased stretch (low complexity) spans 192-218 (GGPKAAEASKPAGEAPKPAGEAPKPAG).

Belongs to the GrpE family. In terms of assembly, homodimer.

The protein localises to the cytoplasm. Its function is as follows. Participates actively in the response to hyperosmotic and heat shock by preventing the aggregation of stress-denatured proteins, in association with DnaK and GrpE. It is the nucleotide exchange factor for DnaK and may function as a thermosensor. Unfolded proteins bind initially to DnaJ; upon interaction with the DnaJ-bound protein, DnaK hydrolyzes its bound ATP, resulting in the formation of a stable complex. GrpE releases ADP from DnaK; ATP binding to DnaK triggers the release of the substrate protein, thus completing the reaction cycle. Several rounds of ATP-dependent interactions between DnaJ, DnaK and GrpE are required for fully efficient folding. This chain is Protein GrpE, found in Methylobacterium nodulans (strain LMG 21967 / CNCM I-2342 / ORS 2060).